A 409-amino-acid polypeptide reads, in one-letter code: Thiaminase-1 (409 aa).

Positions 1-29 (MSKVKGFIYKPLMVMLALLLVVVSPAGAG) are cleaved as a signal peptide. Catalysis depends on C143, which acts as the Nucleophile. Catalysis depends on E271, which acts as the Proton acceptor.

Monomer.

It localises to the secreted. The catalysed reaction is pyridine + thiamine = heteropyrithiamine + 5-(2-hydroxyethyl)-4-methylthiazole. Its function is as follows. Degrades thiamine by replacing its thiazole moiety with a wide range of nucleophiles. This is Thiaminase-1 from Paenibacillus thiaminolyticus (Bacillus thiaminolyticus).